A 195-amino-acid chain; its full sequence is GRF1-interacting factor 2 (195 aa).

A disordered region spans residues Gln166–Lys195. The span at Gly171–Gly180 shows a compositional bias: gly residues. Positions Gly181 to Lys195 are enriched in basic and acidic residues.

This sequence belongs to the SS18 family. In terms of assembly, interacts with GRF1. In terms of tissue distribution, predominantly expressed in shoot tips containing the shoot apical meristem (SAM) and flower buds. Also expressed in mature flowers.

In terms of biological role, transcription coactivator that plays a role in the regulation of cell expansion in leaf and cotyledons tissues. Component of a network formed by miR396, the GRFs and their interacting factors (GIFs) acting in the regulation of meristem function, at least partially through the control of cell proliferation. GIFs are involved in the positive regulation of cell proliferation of lateral organs in a functionally redundant manner. This is GRF1-interacting factor 2 (GIF2) from Arabidopsis thaliana (Mouse-ear cress).